The primary structure comprises 300 residues: Ribonuclease HIII (300 aa).

An RNase H type-2 domain is found at 86–300; that stretch reads RPRLGVDESG…FNEICDSASA (215 aa). Residues aspartate 92, glutamate 93, and aspartate 196 each coordinate a divalent metal cation.

Belongs to the RNase HII family. RnhC subfamily. Mn(2+) serves as cofactor. Mg(2+) is required as a cofactor.

It is found in the cytoplasm. It carries out the reaction Endonucleolytic cleavage to 5'-phosphomonoester.. In terms of biological role, endonuclease that specifically degrades the RNA of RNA-DNA hybrids. The chain is Ribonuclease HIII from Chlamydia caviae (strain ATCC VR-813 / DSM 19441 / 03DC25 / GPIC) (Chlamydophila caviae).